Consider the following 381-residue polypeptide: Probable tRNA sulfurtransferase (381 aa).

One can recognise a THUMP domain in the interval 57 to 160 (EKGIEKLKSV…NKAYVYSKKI (104 aa)). Residues 177–178 (ML), 202–203 (YF), R259, G281, and Q290 contribute to the ATP site.

Belongs to the ThiI family.

It is found in the cytoplasm. It carries out the reaction [ThiI sulfur-carrier protein]-S-sulfanyl-L-cysteine + a uridine in tRNA + 2 reduced [2Fe-2S]-[ferredoxin] + ATP + H(+) = [ThiI sulfur-carrier protein]-L-cysteine + a 4-thiouridine in tRNA + 2 oxidized [2Fe-2S]-[ferredoxin] + AMP + diphosphate. The catalysed reaction is [ThiS sulfur-carrier protein]-C-terminal Gly-Gly-AMP + S-sulfanyl-L-cysteinyl-[cysteine desulfurase] + AH2 = [ThiS sulfur-carrier protein]-C-terminal-Gly-aminoethanethioate + L-cysteinyl-[cysteine desulfurase] + A + AMP + 2 H(+). It participates in cofactor biosynthesis; thiamine diphosphate biosynthesis. In terms of biological role, catalyzes the ATP-dependent transfer of a sulfur to tRNA to produce 4-thiouridine in position 8 of tRNAs, which functions as a near-UV photosensor. Also catalyzes the transfer of sulfur to the sulfur carrier protein ThiS, forming ThiS-thiocarboxylate. This is a step in the synthesis of thiazole, in the thiamine biosynthesis pathway. The sulfur is donated as persulfide by IscS. The protein is Probable tRNA sulfurtransferase of Clostridium kluyveri (strain NBRC 12016).